A 241-amino-acid chain; its full sequence is Large ribosomal subunit protein eL32 (241 aa).

The span at 1–16 shows a compositional bias: acidic residues; that stretch reads MADNEEDVEAEEEYTE. 2 disordered regions span residues 1-47 and 68-182; these read MADN…GADQ and VGGL…HPSG. Over residues 29 to 44 the composition is skewed to basic and acidic residues; it reads ESLREAGFESVEDVRG. Residues 73 to 96 show a composition bias toward acidic residues; the sequence is VESETEAEVEEEGGEEAPDEDVET. A compositionally biased stretch (basic and acidic residues) spans 103 to 116; that stretch reads LTEKTPDLSDEDAR. The span at 133–159 shows a compositional bias: basic residues; sequence DHHKKKRVSTSWRKPRGQLSKQRRGIK.

The protein belongs to the eukaryotic ribosomal protein eL32 family. In terms of assembly, part of the 50S ribosomal subunit. Interacts weakly with protein L15.

In terms of biological role, binds to the 23S rRNA. This chain is Large ribosomal subunit protein eL32 (rpl32e), found in Haloarcula marismortui (strain ATCC 43049 / DSM 3752 / JCM 8966 / VKM B-1809) (Halobacterium marismortui).